Here is a 237-residue protein sequence, read N- to C-terminus: Small ribosomal subunit protein uS2m (237 aa).

It belongs to the universal ribosomal protein uS2 family.

The protein localises to the mitochondrion. This is Small ribosomal subunit protein uS2m (RPS2) from Marchantia polymorpha (Common liverwort).